A 138-amino-acid chain; its full sequence is MMIWKRDLTLDELNATSQNTLVAHLGIVYTRLGDEVLEAEMPVDIRTHQPFGLLHGGASAALAETLGSMAGYLMTRDGQCVVGTELNATHHRAVSQGKVRGVCQPLHLGRQNQSWEITLFDEQGRRCCTCRLGTAVMG.

E64 serves as the catalytic Nucleophile or proton acceptor.

It belongs to the thioesterase PaaI family. Homotetramer. Dimer of dimers. Interacts specifically with the aryl carrier protein (ArCP) domain of EntB.

The protein localises to the cytoplasm. It participates in siderophore biosynthesis; enterobactin biosynthesis. Its function is as follows. Required for optimal enterobactin synthesis. Acts as a proofreading enzyme that prevents EntB misacylation by hydrolyzing the thioester bound existing between EntB and wrongly charged molecules. This Salmonella arizonae (strain ATCC BAA-731 / CDC346-86 / RSK2980) protein is Proofreading thioesterase EntH.